Consider the following 98-residue polypeptide: Integration host factor subunit beta (98 aa).

This sequence belongs to the bacterial histone-like protein family. As to quaternary structure, heterodimer of an alpha and a beta chain.

Functionally, this protein is one of the two subunits of integration host factor, a specific DNA-binding protein that functions in genetic recombination as well as in transcriptional and translational control. This chain is Integration host factor subunit beta, found in Pseudomonas syringae pv. tomato (strain ATCC BAA-871 / DC3000).